A 195-amino-acid chain; its full sequence is Probable GTP-binding protein EngB (195 aa).

The EngB-type G domain maps to 24–195 (ELPEIALAGR…EAWDAILEKL (172 aa)). GTP-binding positions include 32–39 (GRSNVGKS), 59–63 (GKTQL), 77–80 (DVPG), 144–147 (TKAD), and 176–178 (FSS). Mg(2+) contacts are provided by Ser39 and Thr61.

The protein belongs to the TRAFAC class TrmE-Era-EngA-EngB-Septin-like GTPase superfamily. EngB GTPase family. Requires Mg(2+) as cofactor.

Functionally, necessary for normal cell division and for the maintenance of normal septation. The sequence is that of Probable GTP-binding protein EngB from Streptococcus pneumoniae (strain JJA).